A 591-amino-acid polypeptide reads, in one-letter code: V-type ATP synthase alpha chain (591 aa).

Residue Gly233–Thr240 participates in ATP binding.

This sequence belongs to the ATPase alpha/beta chains family.

The catalysed reaction is ATP + H2O + 4 H(+)(in) = ADP + phosphate + 5 H(+)(out). Its function is as follows. Produces ATP from ADP in the presence of a proton gradient across the membrane. The V-type alpha chain is a catalytic subunit. This is V-type ATP synthase alpha chain from Streptococcus pneumoniae serotype 19F (strain G54).